Consider the following 248-residue polypeptide: Probable transcriptional regulatory protein Desal_2886 (248 aa).

The tract at residues 1 to 21 is disordered; the sequence is MAGHSKWANIQHRKGRQDAKR.

The protein belongs to the TACO1 family.

The protein localises to the cytoplasm. This Maridesulfovibrio salexigens (strain ATCC 14822 / DSM 2638 / NCIMB 8403 / VKM B-1763) (Desulfovibrio salexigens) protein is Probable transcriptional regulatory protein Desal_2886.